The chain runs to 323 residues: Arginase, hepatic (323 aa).

Mn(2+)-binding residues include histidine 102, aspartate 125, histidine 127, and aspartate 129. Residues 127–131 (HADIN), 138–140 (SGN), and aspartate 184 each bind substrate. Residues aspartate 233 and aspartate 235 each contribute to the Mn(2+) site. Threonine 247 and glutamate 278 together coordinate substrate.

Belongs to the arginase family. As to quaternary structure, homotrimer. Mn(2+) is required as a cofactor.

The enzyme catalyses L-arginine + H2O = urea + L-ornithine. Its pathway is nitrogen metabolism; urea cycle; L-ornithine and urea from L-arginine: step 1/1. This is Arginase, hepatic from Aquarana catesbeiana (American bullfrog).